The following is a 101-amino-acid chain: Carboxysome shell vertex protein CcmL (101 aa).

Residues 1–84 (MQIAKVRGTV…VDAAVVAIID (84 aa)) form the BMV domain.

Belongs to the CcmL/EutN family. CcmL subfamily. In terms of assembly, homopentamer. Interacts with full-length CcmM.

It is found in the carboxysome. Probably forms vertices in the carboxysome, a polyhedral inclusion where RuBisCO (ribulose bisphosphate carboxylase, rbcL-rbcS) is sequestered. Has been modeled to induce curvature upon insertion into an otherwise flat hexagonal molecular layer of CcmK subunits. In Nostoc sp. (strain PCC 7120 / SAG 25.82 / UTEX 2576), this protein is Carboxysome shell vertex protein CcmL.